We begin with the raw amino-acid sequence, 239 residues long: Small ribosomal subunit protein uS3c (239 aa).

Residues I43–K139 enclose the KH type-2 domain. The tract at residues N50–S80 is disordered.

It belongs to the universal ribosomal protein uS3 family. In terms of assembly, part of the 30S ribosomal subunit.

Its subcellular location is the plastid. It localises to the chloroplast. In Lolium perenne (Perennial ryegrass), this protein is Small ribosomal subunit protein uS3c (rps3).